The primary structure comprises 364 residues: tRNA N6-adenosine threonylcarbamoyltransferase (364 aa).

Residues His115 and His119 each coordinate Fe cation. Residues 137 to 141, Asp170, Gly183, and Asn288 contribute to the substrate site; that span reads LVSGG. Fe cation is bound at residue Asp316.

Belongs to the KAE1 / TsaD family. Fe(2+) is required as a cofactor.

The protein localises to the cytoplasm. It carries out the reaction L-threonylcarbamoyladenylate + adenosine(37) in tRNA = N(6)-L-threonylcarbamoyladenosine(37) in tRNA + AMP + H(+). In terms of biological role, required for the formation of a threonylcarbamoyl group on adenosine at position 37 (t(6)A37) in tRNAs that read codons beginning with adenine. Is involved in the transfer of the threonylcarbamoyl moiety of threonylcarbamoyl-AMP (TC-AMP) to the N6 group of A37, together with TsaE and TsaB. TsaD likely plays a direct catalytic role in this reaction. In Bartonella bacilliformis (strain ATCC 35685 / KC583 / Herrer 020/F12,63), this protein is tRNA N6-adenosine threonylcarbamoyltransferase.